The sequence spans 136 residues: Urease subunit beta (136 aa).

Positions 113-136 (NDEYAGVFGDNGAENVNKKGRKRS) are disordered.

The protein belongs to the urease beta subunit family. Heterotrimer of UreA (gamma), UreB (beta) and UreC (alpha) subunits. Three heterotrimers associate to form the active enzyme.

It is found in the cytoplasm. It carries out the reaction urea + 2 H2O + H(+) = hydrogencarbonate + 2 NH4(+). It functions in the pathway nitrogen metabolism; urea degradation; CO(2) and NH(3) from urea (urease route): step 1/1. The protein is Urease subunit beta of Staphylococcus aureus (strain Newman).